The following is a 283-amino-acid chain: NAD kinase (283 aa).

Catalysis depends on aspartate 66, which acts as the Proton acceptor. Residues 66–67 (DG), 137–138 (ND), arginine 165, aspartate 167, and 178–183 (TGYSLS) each bind NAD(+).

The protein belongs to the NAD kinase family. A divalent metal cation serves as cofactor.

The protein resides in the cytoplasm. The catalysed reaction is NAD(+) + ATP = ADP + NADP(+) + H(+). Functionally, involved in the regulation of the intracellular balance of NAD and NADP, and is a key enzyme in the biosynthesis of NADP. Catalyzes specifically the phosphorylation on 2'-hydroxyl of the adenosine moiety of NAD to yield NADP. This Chloroherpeton thalassium (strain ATCC 35110 / GB-78) protein is NAD kinase.